The chain runs to 181 residues: Ribulose bisphosphate carboxylase small subunit, chloroplastic (181 aa).

A chloroplast-targeting transit peptide spans 1–54 (MASSMLSSAAVVTSQLQATMVAPFTGLKSSAAFPVTRKTNTDITSIASNGGRVS).

This sequence belongs to the RuBisCO small chain family. As to quaternary structure, heterohexadecamer of 8 large and 8 small subunits.

It localises to the plastid. The protein localises to the chloroplast. RuBisCO catalyzes two reactions: the carboxylation of D-ribulose 1,5-bisphosphate, the primary event in carbon dioxide fixation, as well as the oxidative fragmentation of the pentose substrate. Both reactions occur simultaneously and in competition at the same active site. Although the small subunit is not catalytic it is essential for maximal activity. This Raphanus sativus (Radish) protein is Ribulose bisphosphate carboxylase small subunit, chloroplastic.